Consider the following 533-residue polypeptide: RNA end formation protein 2 (533 aa).

Disordered stretches follow at residues 187–254 (SNST…SSMK), 260–279 (LFNK…SKKK), and 321–344 (SSST…PLKK). Residues 206 to 222 (KIKDSEKEKEKEKDKSK) are compositionally biased toward basic and acidic residues. Residues 242–252 (SSPSPTASTSS) are compositionally biased toward low complexity. Low complexity predominate over residues 321-338 (SSSTSGSSTTTVATPASS).

As to quaternary structure, interacts with FIR1. Component of the cleavage and polyadenylation factor (CPF) complex, which is composed of PTI1, SYC1, SSU72, GLC7, MPE1, REF2, PFS2, PTA1, YSH1/BRR5, SWD2, CFT2/YDH1, YTH1, CFT1/YHH1, FIP1 and PAP1. Component of the APT complex, which is a subcomplex of CPF, and is composed of PTI1, SYC1, SSU72, GLC7, REF2, PTA1 and SWD2.

The protein resides in the nucleus. In terms of biological role, RNA-binding component of the cleavage and polyadenylation factor (CPF) complex, which plays a key role in polyadenylation-dependent pre-mRNA 3'-end formation and cooperates with cleavage factors including the CFIA complex and NAB4/CFIB. Negative regulator of poly(A) synthesis. Component of the APT complex, which may be involved in polyadenylation-independent transcript 3'-end formation. REF2 is required for 3'-end formation of snoRNAs. This is RNA end formation protein 2 (REF2) from Saccharomyces cerevisiae (strain ATCC 204508 / S288c) (Baker's yeast).